Here is a 367-residue protein sequence, read N- to C-terminus: Methionine aminopeptidase 1 (367 aa).

The C6H2-type zinc finger occupies 3-57 (GILCASPGCGKPAKLQCPTCVNLKLETPSHFCSQECFKTFWPLHKMYHQKGQPEN). C6, C11, C19, C22, C34, C38, H46, and H50 together coordinate Zn(2+). H185 is an a protein binding site. D202, D213, and H276 together coordinate Zn(2+). H283 serves as a coordination point for a protein. Residues E309 and E340 each contribute to the Zn(2+) site.

Belongs to the peptidase M24A family. Methionine aminopeptidase type 1 subfamily. Associates with the 60S ribosomal subunit of the 80S translational complex. Zn(2+) is required as a cofactor. It depends on Co(2+) as a cofactor. The cofactor is Mn(2+). Fe(2+) serves as cofactor.

The protein localises to the cytoplasm. The enzyme catalyses Release of N-terminal amino acids, preferentially methionine, from peptides and arylamides.. Functionally, cotranslationally removes the N-terminal methionine from nascent proteins. The N-terminal methionine is often cleaved when the second residue in the primary sequence is small and uncharged (Met-Ala-, Cys, Gly, Pro, Ser, Thr, or Val). In Dictyostelium discoideum (Social amoeba), this protein is Methionine aminopeptidase 1 (metap1).